The primary structure comprises 229 residues: C-&gt;U-editing enzyme APOBEC-1 (229 aa).

A CMP/dCMP-type deaminase domain is found at 10–134 (VDPTLRRRIE…QRNRQGLRDL (125 aa)). His-61 is a Zn(2+) binding site. The active-site Proton donor is Glu-63. Positions 93 and 96 each coordinate Zn(2+).

This sequence belongs to the cytidine and deoxycytidylate deaminase family. In terms of assembly, homodimer. Interacts with A1CF; form an mRNA editing complex. Interacts with RBM47; form an mRNA editing complex. Found in a complex with CELF2/CUGBP2 and A1CF. Interacts with HNRPAB. Interacts with SYNCRIP. Zn(2+) serves as cofactor. As to expression, expressed in the spleen. Expressed at lower level in the kidney, testis, lung, brain and liver.

It localises to the cytoplasm. The protein resides in the nucleus. It catalyses the reaction a cytidine in mRNA + H2O + H(+) = a uridine in mRNA + NH4(+). The enzyme catalyses cytidine(6666) in apoB mRNA + H2O + H(+) = uridine(6666) in apoB mRNA + NH4(+). Cytidine deaminase catalyzing the cytidine to uridine postranscriptional editing of a variety of mRNAs. Form complexes with cofactors that confer differential editing activity and selectivity. Responsible for the postranscriptional editing of a CAA codon for Gln to a UAA codon for stop in the apolipoprotein B mRNA. Also involved in CGA (Arg) to UGA (Stop) editing in the NF1 mRNA. May also play a role in the epigenetic regulation of gene expression by participating in DNA demethylation. This Mus musculus (Mouse) protein is C-&gt;U-editing enzyme APOBEC-1.